We begin with the raw amino-acid sequence, 395 residues long: Acetate kinase (395 aa).

Asn-8 serves as a coordination point for Mg(2+). Residue Lys-15 participates in ATP binding. Position 90 (Arg-90) interacts with substrate. The active-site Proton donor/acceptor is Asp-147. ATP is bound by residues 207-211 (HLGNG), 284-286 (DMR), and 330-334 (GIGEN). Mg(2+) is bound at residue Glu-383.

The protein belongs to the acetokinase family. Homodimer. Requires Mg(2+) as cofactor. Mn(2+) serves as cofactor.

It localises to the cytoplasm. The enzyme catalyses acetate + ATP = acetyl phosphate + ADP. It participates in metabolic intermediate biosynthesis; acetyl-CoA biosynthesis; acetyl-CoA from acetate: step 1/2. Its function is as follows. Catalyzes the formation of acetyl phosphate from acetate and ATP. Can also catalyze the reverse reaction. This is Acetate kinase from Enterococcus faecalis (strain ATCC 700802 / V583).